The primary structure comprises 284 residues: Putative thiosulfate sulfurtransferase SseB (284 aa).

Rhodanese domains are found at residues 20-138 (AGDP…SIET) and 169-280 (GAGG…RPVG). Arg-183 provides a ligand contact to substrate. The active-site Cysteine persulfide intermediate is Cys-241.

It carries out the reaction thiosulfate + hydrogen cyanide = thiocyanate + sulfite + 2 H(+). This Mycobacterium tuberculosis (strain CDC 1551 / Oshkosh) protein is Putative thiosulfate sulfurtransferase SseB (sseB).